The sequence spans 211 residues: Endo-1,4-beta-xylanase 3 (211 aa).

The signal sequence occupies residues 1-27 (MKVTAAFAGLLVTAFAAPVPEPVLVSR). A GH11 domain is found at 28–210 (SAGINYVQNY…GAGSASVTIS (183 aa)). Glutamate 106 acts as the Nucleophile in catalysis. A disulfide bridge connects residues cysteine 119 and cysteine 138. Glutamate 197 acts as the Proton donor in catalysis.

Belongs to the glycosyl hydrolase 11 (cellulase G) family.

It is found in the secreted. The catalysed reaction is Endohydrolysis of (1-&gt;4)-beta-D-xylosidic linkages in xylans.. The protein operates within glycan degradation; xylan degradation. This chain is Endo-1,4-beta-xylanase 3 (xynC), found in Aspergillus kawachii (strain NBRC 4308) (White koji mold).